The sequence spans 344 residues: Glyceraldehyde-3-phosphate dehydrogenase (344 aa).

NAD(+) is bound by residues 11–12 (TI) and glycine 110. 139 to 141 (SCN) lines the D-glyceraldehyde 3-phosphate pocket. The active-site Nucleophile is the cysteine 140. NAD(+) is bound at residue arginine 169. 195-196 (HG) serves as a coordination point for D-glyceraldehyde 3-phosphate. Glutamine 302 is an NAD(+) binding site.

The protein belongs to the glyceraldehyde-3-phosphate dehydrogenase family. Homotetramer.

Its subcellular location is the cytoplasm. It carries out the reaction D-glyceraldehyde 3-phosphate + phosphate + NADP(+) = (2R)-3-phospho-glyceroyl phosphate + NADPH + H(+). The enzyme catalyses D-glyceraldehyde 3-phosphate + phosphate + NAD(+) = (2R)-3-phospho-glyceroyl phosphate + NADH + H(+). It participates in carbohydrate degradation; glycolysis; pyruvate from D-glyceraldehyde 3-phosphate: step 1/5. This is Glyceraldehyde-3-phosphate dehydrogenase from Pyrobaculum islandicum (strain DSM 4184 / JCM 9189 / GEO3).